The sequence spans 693 residues: DNA-directed RNA polymerase subunit beta' (693 aa).

4 residues coordinate Zn(2+): C76, C78, C94, and C97. 3 residues coordinate Mg(2+): D496, D498, and D500.

The protein belongs to the RNA polymerase beta' chain family. RpoC1 subfamily. In terms of assembly, in plastids the minimal PEP RNA polymerase catalytic core is composed of four subunits: alpha, beta, beta', and beta''. When a (nuclear-encoded) sigma factor is associated with the core the holoenzyme is formed, which can initiate transcription. Mg(2+) is required as a cofactor. Requires Zn(2+) as cofactor.

It is found in the plastid. The protein localises to the chloroplast. The catalysed reaction is RNA(n) + a ribonucleoside 5'-triphosphate = RNA(n+1) + diphosphate. Its function is as follows. DNA-dependent RNA polymerase catalyzes the transcription of DNA into RNA using the four ribonucleoside triphosphates as substrates. This Nuphar advena (Common spatterdock) protein is DNA-directed RNA polymerase subunit beta'.